The following is a 115-amino-acid chain: Large ribosomal subunit protein bL19 (115 aa).

It belongs to the bacterial ribosomal protein bL19 family.

Functionally, this protein is located at the 30S-50S ribosomal subunit interface and may play a role in the structure and function of the aminoacyl-tRNA binding site. The polypeptide is Large ribosomal subunit protein bL19 (Streptococcus sanguinis (strain SK36)).